Reading from the N-terminus, the 191-residue chain is MSSESKLSQSEKELSGLVLEQKIKGSRKVSNYLVASMLSIGGVGFLLASFSSYFGRDFLPLGNPSTLIFVPQGLVMGLYGVAAFLLAIYFWRLINIDYGSGVNRFDKNKGVLSLSRRGLFKNIEIEIPIDEIKAVKLEVREGFNPLRRVSLRIKGRKDLPISRVGSPQPLLDLENEGAEIARFLEVNLEGI.

The next 2 helical transmembrane spans lie at 34 to 54 (VASM…SSYF) and 68 to 88 (IFVP…LLAI).

This sequence belongs to the Ycf4 family.

It localises to the cellular thylakoid membrane. Functionally, seems to be required for the assembly of the photosystem I complex. The polypeptide is Photosystem I assembly protein Ycf4 (Prochlorococcus marinus (strain NATL2A)).